We begin with the raw amino-acid sequence, 874 residues long: Rho GTPase-activating protein 42 (874 aa).

One can recognise a BAR domain in the interval 7–262; the sequence is EFSDSYLDSP…MKSANQDYRP (256 aa). The stretch at 225–261 forms a coiled coil; it reads KQQLQFNLQNTRNNFESTRQEVERLMQRMKSANQDYR. In terms of domain architecture, PH spans 265–374; it reads QWTMEGYLYV…WLEAMDGKEP (110 aa). Residue Y376 is modified to Phosphotyrosine. Positions 376–572 constitute a Rho-GAP domain; that stretch reads YTLPAIISKK…ILIEHYEKIF (197 aa). Residues 575–720 are disordered; the sequence is APDPSIPLPQ…GDVSPPIDLV (146 aa). Over residues 620-650 the composition is skewed to low complexity; the sequence is DSYSSSPDSTPMGSIESLSSHSSEQNSTTKS. Residues 667-686 are compositionally biased toward polar residues; sequence TPSSSNGQKSLGLWTTSPES. A Phosphoserine modification is found at S683. Residues 687–697 are compositionally biased toward basic and acidic residues; it reads SSREDATKTDA. Residues 700 to 711 are compositionally biased toward polar residues; sequence DCQSVASVTSPG. S740, S753, S756, and S811 each carry phosphoserine. Positions 749-762 are enriched in polar residues; sequence SYSGSIQSLTSVGS. The tract at residues 749 to 777 is disordered; it reads SYSGSIQSLTSVGSKETPKASPNPDLPPK. The SH3 domain occupies 816-874; the sequence is SSGRQAKAMYSCKAEHSHELSFPQGAIFSNVYPSVEPGWLKATYEGKTGLVPENYVVFL. Residue Y870 is modified to Phosphotyrosine.

As to expression, highly and selectively expressed in smooth muscle cells.

May influence blood pressure by functioning as a GTPase-activating protein for RHOA in vascular smooth muscle. The chain is Rho GTPase-activating protein 42 from Homo sapiens (Human).